The chain runs to 276 residues: NAD-capped RNA hydrolase NudC (276 aa).

Arg-82 is a binding site for substrate. Zn(2+) contacts are provided by Cys-112 and Cys-115. Glu-125 is a substrate binding site. Residues Cys-130 and Cys-133 each coordinate Zn(2+). Tyr-138 contacts substrate. The 124-residue stretch at 139–262 (PRISPSMIVL…SIARYLIDLY (124 aa)) folds into the Nudix hydrolase domain. Residues Ala-172, Glu-188, and Glu-192 each coordinate a divalent metal cation. The short motif at 173-194 (GFAEPGESAEDCLVREVREEVA) is the Nudix box element. 206–213 (QCWPFPHS) lines the substrate pocket. Glu-233 is an a divalent metal cation binding site. Ala-255 contributes to the substrate binding site.

The protein belongs to the Nudix hydrolase family. NudC subfamily. Homodimer. The cofactor is Mg(2+). Mn(2+) serves as cofactor. It depends on Zn(2+) as a cofactor.

It catalyses the reaction a 5'-end NAD(+)-phospho-ribonucleoside in mRNA + H2O = a 5'-end phospho-adenosine-phospho-ribonucleoside in mRNA + beta-nicotinamide D-ribonucleotide + 2 H(+). The catalysed reaction is NAD(+) + H2O = beta-nicotinamide D-ribonucleotide + AMP + 2 H(+). The enzyme catalyses NADH + H2O = reduced beta-nicotinamide D-ribonucleotide + AMP + 2 H(+). In terms of biological role, mRNA decapping enzyme that specifically removes the nicotinamide adenine dinucleotide (NAD) cap from a subset of mRNAs by hydrolyzing the diphosphate linkage to produce nicotinamide mononucleotide (NMN) and 5' monophosphate mRNA. The NAD-cap is present at the 5'-end of some mRNAs and stabilizes RNA against 5'-processing. Has preference for mRNAs with a 5'-end purine. Catalyzes the hydrolysis of a broad range of dinucleotide pyrophosphates. This is NAD-capped RNA hydrolase NudC from Pseudomonas putida (strain ATCC 700007 / DSM 6899 / JCM 31910 / BCRC 17059 / LMG 24140 / F1).